The primary structure comprises 118 residues: UPF0344 protein BLi01172/BL01343 (118 aa).

4 helical membrane-spanning segments follow: residues 6-26 (ITSW…YSSG), 33-53 (ITHM…AQLF), 62-82 (EYIA…MLLI), and 89-109 (AATG…VLGL).

Belongs to the UPF0344 family.

Its subcellular location is the cell membrane. In Bacillus licheniformis (strain ATCC 14580 / DSM 13 / JCM 2505 / CCUG 7422 / NBRC 12200 / NCIMB 9375 / NCTC 10341 / NRRL NRS-1264 / Gibson 46), this protein is UPF0344 protein BLi01172/BL01343.